Here is a 371-residue protein sequence, read N- to C-terminus: Alanine dehydrogenase (371 aa).

R15 and K75 together coordinate substrate. The active-site Proton donor/acceptor is the H96. Residues S134, D198, R203, S220, 239–240 (VL), 267–270 (VAID), K279, and 298–301 (VANM) each bind NAD(+). The active-site Proton donor/acceptor is D270.

Belongs to the AlaDH/PNT family. Requires Mg(2+) as cofactor.

The catalysed reaction is L-alanine + NAD(+) + H2O = pyruvate + NH4(+) + NADH + H(+). It participates in amino-acid degradation; L-alanine degradation via dehydrogenase pathway; NH(3) and pyruvate from L-alanine: step 1/1. Its function is as follows. Catalyzes the reversible reductive amination of pyruvate to L-alanine. This chain is Alanine dehydrogenase, found in Halomonas elongata (strain ATCC 33173 / DSM 2581 / NBRC 15536 / NCIMB 2198 / 1H9).